A 90-amino-acid chain; its full sequence is Elongation factor 1-beta (90 aa).

The protein belongs to the EF-1-beta/EF-1-delta family.

In terms of biological role, promotes the exchange of GDP for GTP in EF-1-alpha/GDP, thus allowing the regeneration of EF-1-alpha/GTP that could then be used to form the ternary complex EF-1-alpha/GTP/AAtRNA. This is Elongation factor 1-beta from Desulfurococcus amylolyticus (strain DSM 18924 / JCM 16383 / VKM B-2413 / 1221n) (Desulfurococcus kamchatkensis).